Reading from the N-terminus, the 263-residue chain is Small ribosomal subunit protein eS4 (263 aa).

The S4 RNA-binding domain maps to 42–104; the sequence is LPLIVFLRNR…TGEHFRLVYD (63 aa).

The protein belongs to the eukaryotic ribosomal protein eS4 family.

The polypeptide is Small ribosomal subunit protein eS4 (RPS4Y1) (Pongo pygmaeus (Bornean orangutan)).